Consider the following 99-residue polypeptide: MIGNLKPLEIVLIIAVILLLFGAKKLPDMARSLGKSARILKSEAKAMKKDDAATAAPTTETVADDTVPPQSTTARTIQAAPGDVTSSRPVSEAKPTTQS.

Residues 1–21 (MIGNLKPLEIVLIIAVILLLF) form a helical membrane-spanning segment. Residues 46 to 99 (AMKKDDAATAAPTTETVADDTVPPQSTTARTIQAAPGDVTSSRPVSEAKPTTQS) form a disordered region. A compositionally biased stretch (low complexity) spans 53–69 (ATAAPTTETVADDTVPP). Residues 84 to 99 (VTSSRPVSEAKPTTQS) are compositionally biased toward polar residues.

Belongs to the TatA/E family. In terms of assembly, the Tat system comprises two distinct complexes: a TatABC complex, containing multiple copies of TatA, TatB and TatC subunits, and a separate TatA complex, containing only TatA subunits. Substrates initially bind to the TatABC complex, which probably triggers association of the separate TatA complex to form the active translocon.

It localises to the cell membrane. In terms of biological role, part of the twin-arginine translocation (Tat) system that transports large folded proteins containing a characteristic twin-arginine motif in their signal peptide across membranes. TatA could form the protein-conducting channel of the Tat system. The chain is Sec-independent protein translocase protein TatA from Streptomyces griseus subsp. griseus (strain JCM 4626 / CBS 651.72 / NBRC 13350 / KCC S-0626 / ISP 5235).